A 387-amino-acid polypeptide reads, in one-letter code: Protein kinase ORF16 (387 aa).

A Protein kinase domain is found at 82–381 (KKILSRVGPE…VTLMTELSLL (300 aa)). Residue K122 participates in ATP binding. The active-site Proton acceptor is the D226.

The protein belongs to the protein kinase superfamily. Ser/Thr protein kinase family.

The catalysed reaction is L-seryl-[protein] + ATP = O-phospho-L-seryl-[protein] + ADP + H(+). It catalyses the reaction L-threonyl-[protein] + ATP = O-phospho-L-threonyl-[protein] + ADP + H(+). In Ictalurid herpesvirus 1 (strain Auburn) (IcHV-1), this protein is Protein kinase ORF16 (ORF16).